The sequence spans 190 residues: uncharacterized protein (190 aa).

The 58-residue stretch at 1-58 (MDKRILAETFRLIKQKGFSFTMNDLAAALGTSKRTLYAYYSSKDQLVEAVVEQFIAEM) folds into the HTH tetR-type domain. The H-T-H motif DNA-binding region spans 21-40 (TMNDLAAALGTSKRTLYAYY).

This is an uncharacterized protein from Bacillus subtilis (strain 168).